Here is a 125-residue protein sequence, read N- to C-terminus: Large ribosomal subunit protein bL12 (125 aa).

Belongs to the bacterial ribosomal protein bL12 family. In terms of assembly, homodimer. Part of the ribosomal stalk of the 50S ribosomal subunit. Forms a multimeric L10(L12)X complex, where L10 forms an elongated spine to which 2 to 4 L12 dimers bind in a sequential fashion. Binds GTP-bound translation factors.

Its function is as follows. Forms part of the ribosomal stalk which helps the ribosome interact with GTP-bound translation factors. Is thus essential for accurate translation. The sequence is that of Large ribosomal subunit protein bL12 from Polaromonas sp. (strain JS666 / ATCC BAA-500).